The following is a 122-amino-acid chain: Large ribosomal subunit protein uL14 (122 aa).

This sequence belongs to the universal ribosomal protein uL14 family. Part of the 50S ribosomal subunit. Forms a cluster with proteins L3 and L19. In the 70S ribosome, L14 and L19 interact and together make contacts with the 16S rRNA in bridges B5 and B8.

In terms of biological role, binds to 23S rRNA. Forms part of two intersubunit bridges in the 70S ribosome. This Xanthomonas oryzae pv. oryzae (strain MAFF 311018) protein is Large ribosomal subunit protein uL14.